Reading from the N-terminus, the 421-residue chain is MLDPNSRYVSRLTRDTMALILAGGRGSRLHELTDWRAKPALHFGGKFRIIDFPLSNCVNSGIRRVGVLTQYKAHSLIRHLVRGWSHFKKELGEYVEILPASQRYSPNWYQGTADAIYQNLDIILDEAPKYVMVLSGDHVYQMDYGSMLAYHVETGADLTVSCIEVPIEEAAGAFGVMTVDDNNRILRFDEKPKHPTELNDMPGMTLASMGNYIFNTEFLFEQLRADAENPESEHDFGKNIIPAIIKNSNVRAYRFRDHETDRASYWRDVGTLDSFWLANMELVEPSPQLNLYNQDWPIWTYQTHLPPAKFVFDDDDRRGYAVDSMVSGGCIVSGGKVSKSLLFSDVHVHSYTDLEESVVLPNVQIHRHAKIKRAIIDSGCEIPEGMVIGHDHEHDTARGFRVTKKGVVLVTREMLGQLTPK.

Alpha-D-glucose 1-phosphate is bound by residues Tyr-109, Gly-175, Glu-190 to Lys-191, and Ser-208.

The protein belongs to the bacterial/plant glucose-1-phosphate adenylyltransferase family. In terms of assembly, homotetramer.

It carries out the reaction alpha-D-glucose 1-phosphate + ATP + H(+) = ADP-alpha-D-glucose + diphosphate. The protein operates within glycan biosynthesis; glycogen biosynthesis. Involved in the biosynthesis of ADP-glucose, a building block required for the elongation reactions to produce glycogen. Catalyzes the reaction between ATP and alpha-D-glucose 1-phosphate (G1P) to produce pyrophosphate and ADP-Glc. This is Glucose-1-phosphate adenylyltransferase from Teredinibacter turnerae (strain ATCC 39867 / T7901).